The sequence spans 124 residues: Small ribosomal subunit protein uS12 (124 aa).

At D89 the chain carries 3-methylthioaspartic acid. At K108 the chain carries N6-acetyllysine.

Belongs to the universal ribosomal protein uS12 family. As to quaternary structure, part of the 30S ribosomal subunit. Contacts proteins S8 and S17. May interact with IF1 in the 30S initiation complex.

In terms of biological role, with S4 and S5 plays an important role in translational accuracy. Interacts with and stabilizes bases of the 16S rRNA that are involved in tRNA selection in the A site and with the mRNA backbone. Located at the interface of the 30S and 50S subunits, it traverses the body of the 30S subunit contacting proteins on the other side and probably holding the rRNA structure together. The combined cluster of proteins S8, S12 and S17 appears to hold together the shoulder and platform of the 30S subunit. The chain is Small ribosomal subunit protein uS12 from Escherichia coli O6:K15:H31 (strain 536 / UPEC).